An 862-amino-acid polypeptide reads, in one-letter code: Valine--tRNA ligase (862 aa).

Positions 43–53 (PNVTGSLHMGH) match the 'HIGH' region motif. The Zn(2+) site is built by Cys176, Cys179, Cys344, Cys347, Cys417, Cys420, Cys438, and Cys441. Residues 528 to 532 (KMSKS) carry the 'KMSKS' region motif. ATP is bound at residue Lys531. Positions 802-862 (RRRQEKRLKE…RIREALSQIG (61 aa)) form a coiled coil.

The protein belongs to the class-I aminoacyl-tRNA synthetase family. ValS type 1 subfamily. As to quaternary structure, monomer. Zn(2+) is required as a cofactor.

It is found in the cytoplasm. The catalysed reaction is tRNA(Val) + L-valine + ATP = L-valyl-tRNA(Val) + AMP + diphosphate. Its function is as follows. Catalyzes the attachment of valine to tRNA(Val). As ValRS can inadvertently accommodate and process structurally similar amino acids such as threonine, to avoid such errors, it has a 'posttransfer' editing activity that hydrolyzes mischarged Thr-tRNA(Val) in a tRNA-dependent manner. The chain is Valine--tRNA ligase from Thermus thermophilus (strain ATCC BAA-163 / DSM 7039 / HB27).